The following is a 101-amino-acid chain: Small ribosomal subunit protein uS14 (101 aa).

This sequence belongs to the universal ribosomal protein uS14 family. In terms of assembly, part of the 30S ribosomal subunit. Contacts proteins S3 and S10.

Functionally, binds 16S rRNA, required for the assembly of 30S particles and may also be responsible for determining the conformation of the 16S rRNA at the A site. The chain is Small ribosomal subunit protein uS14 from Shewanella sp. (strain MR-4).